A 133-amino-acid chain; its full sequence is Small ribosomal subunit protein uS8 (133 aa).

It belongs to the universal ribosomal protein uS8 family. As to quaternary structure, part of the 30S ribosomal subunit. Contacts proteins S5 and S12.

Functionally, one of the primary rRNA binding proteins, it binds directly to 16S rRNA central domain where it helps coordinate assembly of the platform of the 30S subunit. This chain is Small ribosomal subunit protein uS8, found in Chloroflexus aggregans (strain MD-66 / DSM 9485).